The sequence spans 270 residues: Protein-ADP-ribose hydrolase (270 aa).

In terms of domain architecture, Macro spans 73-267; sequence VSVKDCQKTN…LYDTYLQKEN (195 aa). Positions 92, 93, and 106 each coordinate ADP-D-ribose. Zn(2+)-binding residues include Cys112, His117, and Cys119. ADP-D-ribose-binding residues include Cys119, Ile120, Asp121, Ser212, Thr213, Gly214, Glu215, and Phe216.

Belongs to the MacroD-type family. Zn-Macro subfamily. Zn(2+) serves as cofactor.

The enzyme catalyses 4-O-(ADP-D-ribosyl)-L-aspartyl-[protein] + H2O = L-aspartyl-[protein] + ADP-D-ribose + H(+). Its function is as follows. ADP-ribosylhydrolase that specifically reverses the SirTM-mediated mono-ADP-ribosylation at an asparatate residue of GcvH-L, by releasing ADP-ribose from the target protein. May play a role in the regulation of the response to host-induced oxidative stress. In Streptococcus pyogenes serotype M18 (strain MGAS8232), this protein is Protein-ADP-ribose hydrolase.